The sequence spans 500 residues: FAD-linked oxidoreductase easE (500 aa).

The region spanning Gln-37–Asp-220 is the FAD-binding PCMH-type domain.

This sequence belongs to the oxygen-dependent FAD-linked oxidoreductase family. Requires FAD as cofactor.

Its pathway is alkaloid biosynthesis; ergot alkaloid biosynthesis. Its function is as follows. FAD-linked oxidoreductase; part of the gene cluster that mediates the biosynthesis of fungal ergot alkaloid. DmaW catalyzes the first step of ergot alkaloid biosynthesis by condensing dimethylallyl diphosphate (DMAP) and tryptophan to form 4-dimethylallyl-L-tryptophan. The second step is catalyzed by the methyltransferase easF that methylates 4-dimethylallyl-L-tryptophan in the presence of S-adenosyl-L-methionine, resulting in the formation of 4-dimethylallyl-L-abrine. The catalase easC and the FAD-dependent oxidoreductase easE then transform 4-dimethylallyl-L-abrine to chanoclavine-I which is further oxidized by easD in the presence of NAD(+), resulting in the formation of chanoclavine-I aldehyde. Chanoclavine-I aldehyde is the precursor of ergoamides and ergopeptines in Clavicipitaceae, and clavine-type alcaloids such as fumiclavine in Trichocomaceae. However, the metabolites downstream of chanoclavine-I aldehyde in Arthrodermataceae have not been identified yet. The chain is FAD-linked oxidoreductase easE from Arthroderma benhamiae (strain ATCC MYA-4681 / CBS 112371) (Trichophyton mentagrophytes).